Here is a 338-residue protein sequence, read N- to C-terminus: MKTDDFDYKLPEELIASYPLENRDASRLLKLNKQTGEIADHKFTDFIDFISPGDLLVFNNSKVMLARLYGSKTTGAKLEYLIERIKNPKLFETHIKANRSPAIGSEIYVEDTLAKVLDKDGGMYLLEIQGDKDIYQLMEEFGHIPLPPYMKRDDEEFDAERYQTVYAQDLGSVAAPTAGLHFSKELMQQIKNKGVDIAYITLHVGSGTFKPVQVDDVESHKMHAEVISVPVEVCQKIRQTKENGGRVIAIGTTSVRSLETAGQNGQIEPYQGETDIFLYPGKKFNVVDAMITNFHLPKSTLIMLVSAFADKEKIIKAYEHAIAERYRFFSYGDAMFIY.

It belongs to the QueA family. Monomer.

The protein localises to the cytoplasm. The catalysed reaction is 7-aminomethyl-7-carbaguanosine(34) in tRNA + S-adenosyl-L-methionine = epoxyqueuosine(34) in tRNA + adenine + L-methionine + 2 H(+). It functions in the pathway tRNA modification; tRNA-queuosine biosynthesis. In terms of biological role, transfers and isomerizes the ribose moiety from AdoMet to the 7-aminomethyl group of 7-deazaguanine (preQ1-tRNA) to give epoxyqueuosine (oQ-tRNA). In Francisella tularensis subsp. novicida (strain U112), this protein is S-adenosylmethionine:tRNA ribosyltransferase-isomerase.